The chain runs to 345 residues: Phenylalanine--tRNA ligase alpha subunit (345 aa).

Mg(2+) is bound at residue glutamate 266.

The protein belongs to the class-II aminoacyl-tRNA synthetase family. Phe-tRNA synthetase alpha subunit type 1 subfamily. In terms of assembly, tetramer of two alpha and two beta subunits. It depends on Mg(2+) as a cofactor.

Its subcellular location is the cytoplasm. The catalysed reaction is tRNA(Phe) + L-phenylalanine + ATP = L-phenylalanyl-tRNA(Phe) + AMP + diphosphate + H(+). This Methylibium petroleiphilum (strain ATCC BAA-1232 / LMG 22953 / PM1) protein is Phenylalanine--tRNA ligase alpha subunit.